A 130-amino-acid polypeptide reads, in one-letter code: MSLMDPLANALNHLSNCERVGKDVAYVQPASKLIGRVFKVMQDKGYMGNFEYIEDGKAGIYKVELTGHINKCGAVRPRYAVKKTEFEKFEKRYLPAKGFGLLIVSTPKGLMTHDEAKSNGLGGRLISYIY.

This sequence belongs to the universal ribosomal protein uS8 family. In terms of assembly, part of the 30S ribosomal subunit.

Its function is as follows. One of the primary rRNA binding proteins, it binds directly to 16S rRNA central domain where it helps coordinate assembly of the platform of the 30S subunit. The chain is Small ribosomal subunit protein uS8 from Methanococcus aeolicus (strain ATCC BAA-1280 / DSM 17508 / OCM 812 / Nankai-3).